Consider the following 508-residue polypeptide: MKILFATSECAPLVKTGGLGDVSAALPPAIAALGHEVMLLMPAYADMPLQGNITGWHSLPAEGPWPAAQLLRVDRGGHEVPLLLLSCPQLYARGGSPYASAQGDHPDNALRFGLLAHVAARIGTPQSPCGWTADIVHANDWPTALAPLYLRQFRDAAGPRGDAVARSMVTVHNLAFQGVFPMDWAQRLGIEDRHLGIEGAEFWGQLSMLKAGLQYADAITTVSPTYAREIQTPELGFGLDGVLRARAGRLQGILNGIDTALWNPSQDTLIPAPFSADRLEGKAACKAALRRTLGLAQDGDRMLFGLVGRMTEQKGIDWVIGGAERLLRQGGQLAILGSGDPALESALRALAKRHPRHMHVTVGFDESLAHGIEAGSDSFLMPSRFEPCGLNQMYSQAYGTPPVVTPTGGLADSVTDADDPAGNGTGFVLRGSSQAAFDQAVGRALHLWKTAPDAWRRLQRNGMQRDFGWTASARAYVQAYGAARNRAETRPQTASALSYREPRPAAEY.

Residue Lys15 participates in ADP-alpha-D-glucose binding. Residues 483-508 are disordered; sequence ARNRAETRPQTASALSYREPRPAAEY.

Belongs to the glycosyltransferase 1 family. Bacterial/plant glycogen synthase subfamily.

The catalysed reaction is [(1-&gt;4)-alpha-D-glucosyl](n) + ADP-alpha-D-glucose = [(1-&gt;4)-alpha-D-glucosyl](n+1) + ADP + H(+). Its pathway is glycan biosynthesis; glycogen biosynthesis. In terms of biological role, synthesizes alpha-1,4-glucan chains using ADP-glucose. In Paracidovorax citrulli (strain AAC00-1) (Acidovorax citrulli), this protein is Glycogen synthase.